The chain runs to 137 residues: MKDKMWCEDTAQPHRRLPAPPSSSSPTVVFQSHRRLLAPPSSSWTLWVAPRCGCCSPLCPKRVCASLCRVLAVTWSLTKLPFPLSPILLSRPGWLPQPSSPGPACAEPSSQEGGDTDLRSYGCFVCGWAWPTLSPRP.

The interval 1 to 26 (MKDKMWCEDTAQPHRRLPAPPSSSSP) is disordered.

This is an uncharacterized protein from Homo sapiens (Human).